Here is a 331-residue protein sequence, read N- to C-terminus: Tungstate uptake system ATP-binding protein TupC (331 aa).

Residues 2–230 form the ABC transporter domain; the sequence is IEISNLFFNY…NQGVKFCNFI (229 aa). ATP is bound at residue 34-41; sequence GANGSGKS.

This sequence belongs to the ABC transporter superfamily. As to quaternary structure, the complex is composed of two ATP-binding proteins (TupC), two transmembrane proteins (TupB) and a solute-binding protein (TupA).

It catalyses the reaction tungstate(in) + ATP + H2O = tungstate(out) + ADP + phosphate + H(+). Functionally, part of an ABC transporter complex involved in ultra-high affinity tungstate uptake. Probably responsible for energy coupling to the transport system. In Campylobacter jejuni subsp. jejuni serotype O:2 (strain ATCC 700819 / NCTC 11168), this protein is Tungstate uptake system ATP-binding protein TupC.